The following is a 330-amino-acid chain: DNA-directed RNA polymerase subunit alpha (330 aa).

Positions 1-235 (MVREKVKVST…DLFIHFLHAK (235 aa)) are alpha N-terminal domain (alpha-NTD). The alpha C-terminal domain (alpha-CTD) stretch occupies residues 270–330 (IALKYIFIDQ…KQILGILEKK (61 aa)).

This sequence belongs to the RNA polymerase alpha chain family. In plastids the minimal PEP RNA polymerase catalytic core is composed of four subunits: alpha, beta, beta', and beta''. When a (nuclear-encoded) sigma factor is associated with the core the holoenzyme is formed, which can initiate transcription.

The protein localises to the plastid. It is found in the chloroplast. The enzyme catalyses RNA(n) + a ribonucleoside 5'-triphosphate = RNA(n+1) + diphosphate. Functionally, DNA-dependent RNA polymerase catalyzes the transcription of DNA into RNA using the four ribonucleoside triphosphates as substrates. The sequence is that of DNA-directed RNA polymerase subunit alpha (rpoA) from Gossypium barbadense (Sea Island cotton).